Consider the following 140-residue polypeptide: FAD synthase (140 aa).

Residues T10–F11, H15–H18, and N93 contribute to the ATP site.

It belongs to the archaeal FAD synthase family. In terms of assembly, homodimer. The cofactor is a divalent metal cation.

It carries out the reaction FMN + ATP + H(+) = FAD + diphosphate. It participates in cofactor biosynthesis; FAD biosynthesis; FAD from FMN: step 1/1. Functionally, catalyzes the transfer of the AMP portion of ATP to flavin mononucleotide (FMN) to produce flavin adenine dinucleotide (FAD) coenzyme. The protein is FAD synthase of Methanocella arvoryzae (strain DSM 22066 / NBRC 105507 / MRE50).